Reading from the N-terminus, the 261-residue chain is Transcription antitermination protein NusB (261 aa).

Residues 168-261 (ARVEDQPSDD…DLHKKDTTDD (94 aa)) form a disordered region. Residues 217-228 (VDTTSGNASDPE) show a composition bias toward polar residues. Residues 242–261 (PTSKDHELATDLHKKDTTDD) show a composition bias toward basic and acidic residues.

The protein belongs to the NusB family.

In terms of biological role, involved in transcription antitermination. Required for transcription of ribosomal RNA (rRNA) genes. Binds specifically to the boxA antiterminator sequence of the ribosomal RNA (rrn) operons. The sequence is that of Transcription antitermination protein NusB from Cutibacterium acnes (strain DSM 16379 / KPA171202) (Propionibacterium acnes).